The following is a 454-amino-acid chain: MLNQNSHFIFIILAIFLVLPLSLLSKNVNAQIPLRRHLLSHESEHYAVIFDAGSTGSRVHVFRFDEKLGLLPIGNNIEYFMATEPGLSSYAEDPKAAANSLEPLLDGAEGVVPQELQSETPLELGATAGLRMLKGDAAEKILQAVRNLVKNQSTFHSKDQWVTILDGTQEGSYMWAAINYLLGNLGKDYKSTTATIDLGGGSVQMAYAISNEQFAKAPQNEDGEPYVQQKHLMSKDYNLYVHSYLNYGQLAGRAEIFKASRNESNPCALEGCDGYYSYGGVDYKVKAPKKGSSWKRCRRLTRHALKINAKCNIEECTFNGVWNGGGGDGQKNIHASSFFYDIGAQVGIVDTKFPSALAKPIQYLNAAKVACQTNVADIKSIFPKTQDRNIPYLCMDLIYEYTLLVDGFGLNPHKEITVIHDVQYKNYLVGAAWPLGCAIDLVSSTTNKIRVASS.

Over methionine 1 to histidine 7 the chain is Cytoplasmic. Residues phenylalanine 8–valine 28 form a helical; Signal-anchor for type II membrane protein membrane-spanning segment. The Extracellular segment spans residues asparagine 29–serine 454. Valine 48–arginine 58 contacts ATP. Residue asparagine 151 is glycosylated (N-linked (GlcNAc...) asparagine). Glutamate 170 acts as the Proton acceptor in catalysis. ATP is bound at residue alanine 194–glutamine 204. Asparagine 262 carries an N-linked (GlcNAc...) asparagine glycan.

Belongs to the GDA1/CD39 NTPase family. Requires Ca(2+) as cofactor. In terms of processing, the N-terminus is blocked.

The protein resides in the membrane. It carries out the reaction a ribonucleoside 5'-triphosphate + 2 H2O = a ribonucleoside 5'-phosphate + 2 phosphate + 2 H(+). Catalyzes the hydrolysis of phosphoanhydride bonds of nucleoside tri- and di-phosphates. This Solanum tuberosum (Potato) protein is Apyrase (RROP1).